Here is a 263-residue protein sequence, read N- to C-terminus: Endonuclease 8 (263 aa).

Residue P2 is the Schiff-base intermediate with DNA of the active site. The active-site Proton donor is E3. Residue K53 is the Proton donor; for beta-elimination activity of the active site. DNA is bound by residues Q70, R125, and N169. An FPG-type zinc finger spans residues 229 to 263 (KVFHRDGEACERCGGIIEKTTLSSRPFYWCPHCQK). Residue R253 is the Proton donor; for delta-elimination activity of the active site.

This sequence belongs to the FPG family. Zn(2+) is required as a cofactor.

The enzyme catalyses 2'-deoxyribonucleotide-(2'-deoxyribose 5'-phosphate)-2'-deoxyribonucleotide-DNA = a 3'-end 2'-deoxyribonucleotide-(2,3-dehydro-2,3-deoxyribose 5'-phosphate)-DNA + a 5'-end 5'-phospho-2'-deoxyribonucleoside-DNA + H(+). Its function is as follows. Involved in base excision repair of DNA damaged by oxidation or by mutagenic agents. Acts as a DNA glycosylase that recognizes and removes damaged bases. Has a preference for oxidized pyrimidines, such as thymine glycol, 5,6-dihydrouracil and 5,6-dihydrothymine. Has AP (apurinic/apyrimidinic) lyase activity and introduces nicks in the DNA strand. Cleaves the DNA backbone by beta-delta elimination to generate a single-strand break at the site of the removed base with both 3'- and 5'-phosphates. The protein is Endonuclease 8 of Salmonella schwarzengrund (strain CVM19633).